A 1829-amino-acid polypeptide reads, in one-letter code: Afadin (1829 aa).

Residues 39–133 (FHGVMRFYFQ…GRFVLKNEND (95 aa)) enclose the Ras-associating 1 domain. Positions 129–196 (KNENDAIPAK…PSQGDDSENS (68 aa)) are disordered. Positions 146–186 (EKQEKEGVIQNFKRTLSKKEKKEKKKREKEALRQASDKEER) form a coiled coil. Basic residues predominate over residues 160–172 (TLSKKEKKEKKKR). The segment covering 173 to 189 (EKEALRQASDKEERPSQ) has biased composition (basic and acidic residues). Phosphoserine occurs at positions 216, 246, and 256. Positions 246-348 (SGGTLRIYAD…LVFQLKRRPP (103 aa)) constitute a Ras-associating 2 domain. Basic and acidic residues predominate over residues 356–371 (KKHVEGKPLKGKDRAD). The segment at 356-377 (KKHVEGKPLKGKDRADGSGYGS) is disordered. A phosphoserine mark is found at serine 391 and serine 424. The 67-residue stretch at 441–507 (FGPGIQPHHC…KFVDPIQDHV (67 aa)) folds into the FHA domain. Phosphoserine occurs at positions 512, 557, 562, 589, and 655. The interval 539–595 (DIHSGTALPASRSTTRLDSDRVSSASSTAERGMVKPMIRLDQEQDYRRRESRTQDAA) is disordered. Residues 576-591 (IRLDQEQDYRRRESRT) show a composition bias toward basic and acidic residues. The Dilute domain occupies 668–915 (NKMVSMMEGV…IENVVAVAEN (248 aa)). The region spanning 1014 to 1100 (VITVTLKKQN…VVTLEVAKQG (87 aa)) is the PDZ domain. A phosphoserine mark is found at serine 1090, serine 1114, serine 1133, serine 1147, serine 1150, serine 1179, serine 1180, serine 1189, and serine 1206. A disordered region spans residues 1114–1230 (SPMMQRISDR…PRPEAYPIPT (117 aa)). The span at 1120-1135 (ISDRRGSGKPRPKSEG) shows a compositional bias: basic and acidic residues. A compositionally biased stretch (polar residues) spans 1139-1150 (YNNSAQNGSPES). The span at 1159 to 1179 (SEPKKLPGDDRLMKNRADHRS) shows a compositional bias: basic and acidic residues. Positions 1195–1217 (PYTSGTAAKITSVSTGNLCTEEQ) are enriched in polar residues. Residues threonine 1218 and threonine 1239 each carry the phosphothreonine modification. Phosphoserine is present on residues serine 1245 and serine 1282. Residues 1300 to 1309 (ESGMDRKCDS) are compositionally biased toward basic and acidic residues. Disordered stretches follow at residues 1300 to 1533 (ESGM…EKQQ) and 1574 to 1724 (RLQE…KTQV). The segment covering 1316–1325 (SSSVESSTSS) has biased composition (low complexity). Over residues 1332 to 1344 (SSKSVTPASTLTK) the composition is skewed to polar residues. Position 1335 is a phosphoserine (serine 1335). A Phosphothreonine modification is found at threonine 1337. The span at 1371–1380 (LPPPPPPPPA) shows a compositional bias: pro residues. The span at 1401–1412 (NQAAPQSAQVAA) shows a compositional bias: low complexity. A compositionally biased stretch (basic and acidic residues) spans 1413-1447 (AERKKREEHQRWYEKEKARLEEERERKRREQERKL). A coiled-coil region spans residues 1417-1454 (KREEHQRWYEKEKARLEEERERKRREQERKLGQMRTQS). Positions 1450–1464 (MRTQSLNPASFSPLA) are enriched in polar residues. Residues 1494-1510 (TIERRDLQYITISKEEL) show a composition bias toward basic and acidic residues. 2 positions are modified to phosphoserine: serine 1506 and serine 1517. The segment covering 1520-1533 (PWKRDAREKLEKQQ) has biased composition (basic and acidic residues). A coiled-coil region spans residues 1530–1564 (EKQQQMHIVDMLSKEIHELQNKGDRTAEESDRLRK). Residues 1583 to 1594 (EDDDEEEDDDVD) show a composition bias toward acidic residues. Residues 1600–1672 (QRLEAERRAR…SRLEAERRRQ (73 aa)) are a coiled coil. Basic and acidic residues predominate over residues 1602 to 1682 (LEAERRARLQ…HEEAARRLLE (81 aa)). Phosphoserine is present on serine 1701. Positions 1715–1724 (RNASYLKTQV) are enriched in polar residues. Residue serine 1726 is modified to Phosphoserine. The segment at 1742–1829 (DEEENYVPAG…TELENELNTK (88 aa)) is disordered. Residues 1753-1764 (NSYSGSAGTTAG) are compositionally biased toward polar residues. Over residues 1768-1781 (APRDTREKLSRSQD) the composition is skewed to basic and acidic residues. Residues serine 1779 and serine 1804 each carry the phosphoserine modification. The segment covering 1809–1829 (VSDKVKASRKLTELENELNTK) has biased composition (basic and acidic residues). Position 1812 is an N6-acetyllysine (lysine 1812).

Homodimer. Interacts with F-actin, nectin and NECTIN3. Essential for the association of nectin and E-cadherin. Isoform 2/s-afadin does not interact with F-actin. Interacts with ZO-1 and occludin, but probably in an indirect manner. Interacts with RIT1, RIT2, NRXN1 and BCR. Interacts with ADAM10; the interaction locks ADAM10 at adherens junctions following ADAM10 recruitment to adherens junctions by TSPAN33. Isoform 1 is widely expressed, including in heart, brain, spleen, lung, liver, skeletal muscle, kidney and testis. Isoform 2 is mainly expressed in the brain.

The protein localises to the cell junction. The protein resides in the adherens junction. Belongs to an adhesion system, probably together with the E-cadherin-catenin system, which plays a role in the organization of homotypic, interneuronal and heterotypic cell-cell adherens junctions (AJs). Nectin- and actin-filament-binding protein that connects nectin to the actin cytoskeleton. May play a key role in the organization of epithelial structures of the embryonic ectoderm. Essential for the organization of adherens junctions. The polypeptide is Afadin (Rattus norvegicus (Rat)).